Reading from the N-terminus, the 1910-residue chain is A disintegrin and metalloproteinase with thrombospondin motifs 20 (1910 aa).

The N-terminal stretch at 1–21 (MWVAKWLTGLLYHLSLFITRS) is a signal peptide. Residues 22–253 (WEVDFHPRQE…DERRHSRKKR (232 aa)) constitute a propeptide that is removed on maturation. 2 N-linked (GlcNAc...) asparagine glycosylation sites follow: N92 and N191. A Peptidase M12B domain is found at 259–467 (RYIEIMVTAD…GYGECLLDKP (209 aa)). 11 disulfide bridges follow: C334–C387, C363–C369, C381–C462, C419–C446, C489–C511, C500–C521, C506–C540, C534–C545, C568–C605, C572–C610, and C583–C595. Residue H403 participates in Zn(2+) binding. E404 is an active-site residue. Zn(2+)-binding residues include H407 and H413. N-linked (GlcNAc...) asparagine glycosylation is present at N445. The Disintegrin domain occupies 468-555 (DEEIYNLPSE…VNKETETRPV (88 aa)). Residues 556-611 (NGEWGPWEPYSSCSRTCGGGIESATRRCNRPEPRNGGNYCVGRRMKFRSCNTDSCP) form the TSP type-1 1 domain. N-linked (GlcNAc...) asparagine glycans are attached at residues N702, N717, N728, N809, and N870. Residues 724-846 (TGVFNSSHYG…FNIPLEERSD (123 aa)) form a spacer region. 14 TSP type-1 domains span residues 846–904 (DMFT…NTDC), 905–961 (ELRW…QELC), 966–1023 (VFTR…FSCP), 1024–1073 (SWAA…SPCE), 1076–1135 (TCAS…TPCS), 1152–1206 (KMAQ…DCFT), 1207–1264 (PCGE…AACP), 1304–1356 (RGNQ…QCGP), 1358–1416 (PCPQ…HACP), 1417–1475 (ADVS…VRCP), 1476–1531 (SWKA…QDCV), 1535–1588 (GMER…NPPC), 1589–1652 (NYIV…INSC), and 1654–1710 (HLAT…NDCK). The N-linked (GlcNAc...) asparagine glycan is linked to N1061. N1456 carries an N-linked (GlcNAc...) asparagine glycan. N-linked (GlcNAc...) asparagine glycosylation is found at N1542 and N1572. One can recognise a GON domain in the interval 1711–1910 (SFTTCKEIQV…MTTGLPIQVI (200 aa)). N1763, N1781, and N1852 each carry an N-linked (GlcNAc...) asparagine glycan.

Zn(2+) is required as a cofactor. Post-translationally, the precursor is cleaved by a furin endopeptidase. In terms of processing, glycosylated. Can be O-fucosylated by POFUT2 on a serine or a threonine residue found within the consensus sequence C1-X(2)-(S/T)-C2-G of the TSP type-1 repeat domains where C1 and C2 are the first and second cysteine residue of the repeat, respectively. Fucosylated repeats can then be further glycosylated by the addition of a beta-1,3-glucose residue by the glucosyltransferase, B3GALTL. Fucosylation mediates the efficient secretion of ADAMTS family members. Can also be C-glycosylated with one or two mannose molecules on tryptophan residues within the consensus sequence W-X-X-W of the TPRs, and N-glycosylated. These other glycosylations can also facilitate secretion. In terms of tissue distribution, very sparingly expressed, although is detected at low levels in testis, prostate, ovary, heart, placenta, lung and pancreas. Overexpressed in several brain, colon and breast carcinomas.

It localises to the secreted. The protein resides in the extracellular space. Its subcellular location is the extracellular matrix. Functionally, may play a role in tissue-remodeling process occurring in both normal and pathological conditions. May have a protease-independent function in the transport from the endoplasmic reticulum to the Golgi apparatus of secretory cargos, mediated by the GON domain. The polypeptide is A disintegrin and metalloproteinase with thrombospondin motifs 20 (ADAMTS20) (Homo sapiens (Human)).